Here is an 842-residue protein sequence, read N- to C-terminus: Alanine--tRNA ligase (842 aa).

Residues H549, H553, C650, and H654 each coordinate Zn(2+).

This sequence belongs to the class-II aminoacyl-tRNA synthetase family. It depends on Zn(2+) as a cofactor.

The protein localises to the cytoplasm. The enzyme catalyses tRNA(Ala) + L-alanine + ATP = L-alanyl-tRNA(Ala) + AMP + diphosphate. Functionally, catalyzes the attachment of alanine to tRNA(Ala) in a two-step reaction: alanine is first activated by ATP to form Ala-AMP and then transferred to the acceptor end of tRNA(Ala). Also edits incorrectly charged Ser-tRNA(Ala) and Gly-tRNA(Ala) via its editing domain. This is Alanine--tRNA ligase from Campylobacter jejuni subsp. jejuni serotype O:23/36 (strain 81-176).